Reading from the N-terminus, the 385-residue chain is Probable protein phosphatase 2C 79 (385 aa).

Residues methionine 1–serine 18 form the signal peptide. Positions aspartate 47–leucine 356 constitute a PPM-type phosphatase domain. At serine 76 the chain carries Phosphoserine. Mn(2+)-binding residues include aspartate 87, glycine 88, aspartate 288, and aspartate 347.

It belongs to the PP2C family. The cofactor is Mg(2+). Mn(2+) is required as a cofactor.

It catalyses the reaction O-phospho-L-seryl-[protein] + H2O = L-seryl-[protein] + phosphate. It carries out the reaction O-phospho-L-threonyl-[protein] + H2O = L-threonyl-[protein] + phosphate. May dephosphorylate and repress plasma membrane H(+)-ATPases (PM H(+)-ATPases, e.g. AHA1 and AHA2), thus influencing negatively plant growth and fitness. The chain is Probable protein phosphatase 2C 79 from Arabidopsis thaliana (Mouse-ear cress).